The primary structure comprises 105 residues: Nitrogen fixation nifHD region glnB-like protein 1 (105 aa).

This sequence belongs to the P(II) protein family.

In terms of biological role, could be involved in the regulation of nitrogen fixation. The polypeptide is Nitrogen fixation nifHD region glnB-like protein 1 (glnBI) (Methanococcus maripaludis (strain DSM 14266 / JCM 13030 / NBRC 101832 / S2 / LL)).